Reading from the N-terminus, the 343-residue chain is Phosphoribosylformylglycinamidine cyclo-ligase (343 aa).

Belongs to the AIR synthase family.

It is found in the cytoplasm. The enzyme catalyses 2-formamido-N(1)-(5-O-phospho-beta-D-ribosyl)acetamidine + ATP = 5-amino-1-(5-phospho-beta-D-ribosyl)imidazole + ADP + phosphate + H(+). Its pathway is purine metabolism; IMP biosynthesis via de novo pathway; 5-amino-1-(5-phospho-D-ribosyl)imidazole from N(2)-formyl-N(1)-(5-phospho-D-ribosyl)glycinamide: step 2/2. This Parasynechococcus marenigrum (strain WH8102) protein is Phosphoribosylformylglycinamidine cyclo-ligase.